The following is a 335-amino-acid chain: tRNA N6-adenosine threonylcarbamoyltransferase (335 aa).

Fe cation contacts are provided by H110 and H114. Residues 132-136 (LVSGG), D165, G178, and N271 contribute to the substrate site. Residue D299 participates in Fe cation binding.

This sequence belongs to the KAE1 / TsaD family. Fe(2+) is required as a cofactor.

The protein resides in the cytoplasm. The enzyme catalyses L-threonylcarbamoyladenylate + adenosine(37) in tRNA = N(6)-L-threonylcarbamoyladenosine(37) in tRNA + AMP + H(+). Functionally, required for the formation of a threonylcarbamoyl group on adenosine at position 37 (t(6)A37) in tRNAs that read codons beginning with adenine. Is involved in the transfer of the threonylcarbamoyl moiety of threonylcarbamoyl-AMP (TC-AMP) to the N6 group of A37, together with TsaE and TsaB. TsaD likely plays a direct catalytic role in this reaction. In Campylobacter jejuni subsp. jejuni serotype O:6 (strain 81116 / NCTC 11828), this protein is tRNA N6-adenosine threonylcarbamoyltransferase.